A 192-amino-acid polypeptide reads, in one-letter code: Thymidylate kinase (192 aa).

An ATP-binding site is contributed by 7–14 (GIDCVGKS).

This sequence belongs to the thymidylate kinase family.

It carries out the reaction dTMP + ATP = dTDP + ADP. In terms of biological role, phosphorylation of dTMP to form dTDP in both de novo and salvage pathways of dTTP synthesis. The protein is Thymidylate kinase of Campylobacter jejuni subsp. jejuni serotype O:23/36 (strain 81-176).